Here is a 437-residue protein sequence, read N- to C-terminus: Carboxypeptidase A6 (437 aa).

A signal peptide spans 1–30; the sequence is MKCLGKRRGQAAAFLPLCWLFLKILQPGHS. A propeptide spans 31–129 (activation peptide); it reads HLYNNRYAGD…SSLHTQRNRR (99 aa). 2 N-linked (GlcNAc...) asparagine glycosylation sites follow: N89 and N153. The 295-residue stretch at 138–432 folds into the Peptidase M14 domain; the sequence is VYHSLEEIQN…LAVKNITMHL (295 aa). Zn(2+) contacts are provided by H196 and E199. Substrate contacts are provided by residues 196–199, R254, and 271–272; these read HARE and NR. A disulfide bond links C265 and C288. H324 is a binding site for Zn(2+). Substrate-binding positions include 325-326 and Y376; that span reads AY. E398 (proton donor/acceptor) is an active-site residue. The N-linked (GlcNAc...) asparagine glycan is linked to N427.

This sequence belongs to the peptidase M14 family. Zn(2+) is required as a cofactor. Expressed in the hippocampus, nucleus raphe, and cortex.

It localises to the secreted. The protein resides in the extracellular space. It is found in the extracellular matrix. May be involved in the proteolytic inactivation of enkephalins and neurotensin in some brain areas. May convert inactive angiotensin I into the biologically active angiotensin II. Releases a C-terminal amino acid, with preference for large hydrophobic C-terminal amino acids and shows only very weak activity toward small amino acids and histidine. This is Carboxypeptidase A6 (CPA6) from Homo sapiens (Human).